Reading from the N-terminus, the 765-residue chain is Palmitoyltransferase ZDHHC8 (765 aa).

The Cytoplasmic portion of the chain corresponds to 1-13 (MPRSPGTRLKPAK). A helical transmembrane segment spans residues 14-34 (YIPVATAAALLVGSSTLFFVF). Over 35 to 52 (TCPWLTRAVSPAVPVYNG) the chain is Lumenal. A helical membrane pass occupies residues 53–73 (IIFLFVLANFSMATFMDPGVF). The Cytoplasmic portion of the chain corresponds to 74–148 (PRADEDEDKE…NCIGRRNYRY (75 aa)). One can recognise a DHHC domain in the interval 104–154 (KWCATCHFYRPPRCSHCSVCDNCVEDFDHHCPWVNNCIGRRNYRYFFLFLL). The active-site S-palmitoyl cysteine intermediate is Cys-134. Residues 149–169 (FFLFLLSLSAHMVGVVAFGLV) form a helical membrane-spanning segment. At 170–190 (YVLNHAEGLGAAHTTITMAVM) the chain is on the lumenal side. A helical transmembrane segment spans residues 191 to 211 (CVAGLFFIPVIGLTGFHVVLV). At 212–765 (TRGRTTNEQV…VGGTTYEISV (554 aa)) the chain is on the cytoplasmic side. The segment at 293-352 (GLGRSKSKGSLDRLDEKPLDLGPPLPPKIEAGTFSSDLQTPRPGSAESALSVQRTSPPTP) is disordered. Over residues 301–311 (GSLDRLDEKPL) the composition is skewed to basic and acidic residues. At Ser-337 the chain carries Phosphoserine. Arg-441 carries the post-translational modification Omega-N-methylarginine. The disordered stretch occupies residues 509–540 (LHPGATGDPPRPLPRSFSPVLGPRPREPSPVR). 5 positions are modified to phosphoserine: Ser-606, Ser-627, Ser-675, Ser-725, and Ser-743. A disordered region spans residues 613–746 (GPGFGGARNP…PPGPSASPTR (134 aa)). Residues 622 to 653 (PALQTSLSSLSSSVSRAPRTSSSSLQADQASS) show a composition bias toward low complexity.

The protein belongs to the DHHC palmitoyltransferase family. ERF2/ZDHHC9 subfamily.

The protein localises to the golgi apparatus membrane. It localises to the mitochondrion membrane. The catalysed reaction is L-cysteinyl-[protein] + hexadecanoyl-CoA = S-hexadecanoyl-L-cysteinyl-[protein] + CoA. Palmitoyltransferase that catalyzes the addition of palmitate onto various protein substrates and therefore functions in several unrelated biological processes. Through the palmitoylation of ABCA1 regulates the localization of the transporter to the plasma membrane and thereby regulates its function in cholesterol and phospholipid efflux. Could also pamitoylate the D(2) dopamine receptor DRD2 and regulate its stability and localization to the plasma membrane. Could also play a role in glutamatergic transmission. This is Palmitoyltransferase ZDHHC8 from Pan troglodytes (Chimpanzee).